Here is a 152-residue protein sequence, read N- to C-terminus: Transcriptional regulator MraZ (152 aa).

2 SpoVT-AbrB domains span residues 5–52 (ASAI…PIHE) and 81–124 (AHEV…DEQA).

Belongs to the MraZ family. In terms of assembly, forms oligomers.

The protein resides in the cytoplasm. It localises to the nucleoid. The chain is Transcriptional regulator MraZ from Shewanella oneidensis (strain ATCC 700550 / JCM 31522 / CIP 106686 / LMG 19005 / NCIMB 14063 / MR-1).